Consider the following 137-residue polypeptide: Large ribosomal subunit protein uL16c (137 aa).

The protein belongs to the universal ribosomal protein uL16 family. As to quaternary structure, part of the 50S ribosomal subunit.

The protein resides in the plastid. It is found in the chloroplast. The protein is Large ribosomal subunit protein uL16c of Adiantum capillus-veneris (Maidenhair fern).